Here is a 397-residue protein sequence, read N- to C-terminus: Glia-derived nexin (397 aa).

The first 19 residues, 1–19, serve as a signal peptide directing secretion; that stretch reads MNWHFPFFILTTVTLYSVH. An N-linked (GlcNAc...) asparagine glycan is attached at asparagine 159.

Belongs to the serpin family. As to expression, most abundant in seminal vesicles.

The protein resides in the secreted. Its subcellular location is the extracellular space. In terms of biological role, serine protease inhibitor with activity toward thrombin, trypsin, and urokinase. Promotes neurite extension by inhibiting thrombin. Binds heparin. The protein is Glia-derived nexin (Serpine2) of Mus musculus (Mouse).